The sequence spans 398 residues: 1-deoxy-D-xylulose 5-phosphate reductoisomerase (398 aa).

NADPH contacts are provided by Thr10, Gly11, Ser12, Ile13, Gly36, Lys37, Asn38, and Asn124. Lys125 is a 1-deoxy-D-xylulose 5-phosphate binding site. Glu126 provides a ligand contact to NADPH. Residue Asp150 participates in Mn(2+) binding. 1-deoxy-D-xylulose 5-phosphate contacts are provided by Ser151, Glu152, Ser186, and His209. Glu152 lines the Mn(2+) pocket. Gly215 is a binding site for NADPH. The 1-deoxy-D-xylulose 5-phosphate site is built by Ser222, Asn227, Lys228, and Glu231. Mn(2+) is bound at residue Glu231.

It belongs to the DXR family. Homodimer. It depends on Mg(2+) as a cofactor. Requires Mn(2+) as cofactor.

The catalysed reaction is 2-C-methyl-D-erythritol 4-phosphate + NADP(+) = 1-deoxy-D-xylulose 5-phosphate + NADPH + H(+). It functions in the pathway isoprenoid biosynthesis; isopentenyl diphosphate biosynthesis via DXP pathway; isopentenyl diphosphate from 1-deoxy-D-xylulose 5-phosphate: step 1/6. Its function is as follows. Catalyzes the NADPH-dependent rearrangement and reduction of 1-deoxy-D-xylulose-5-phosphate (DXP) to 2-C-methyl-D-erythritol 4-phosphate (MEP). In Escherichia coli O157:H7, this protein is 1-deoxy-D-xylulose 5-phosphate reductoisomerase.